A 104-amino-acid chain; its full sequence is UPF0147 protein MK1586 (104 aa).

It belongs to the UPF0147 family.

This Methanopyrus kandleri (strain AV19 / DSM 6324 / JCM 9639 / NBRC 100938) protein is UPF0147 protein MK1586.